The following is a 422-amino-acid chain: Imidazolonepropionase (422 aa).

Residues H82 and H84 each contribute to the Fe(3+) site. Zn(2+)-binding residues include H82 and H84. 4-imidazolone-5-propanoate-binding residues include R91, Y154, and H187. Position 154 (Y154) interacts with N-formimidoyl-L-glutamate. H252 serves as a coordination point for Fe(3+). H252 is a binding site for Zn(2+). A 4-imidazolone-5-propanoate-binding site is contributed by E255. Residue D327 participates in Fe(3+) binding. D327 contacts Zn(2+). Residues N329 and G331 each coordinate N-formimidoyl-L-glutamate. S332 serves as a coordination point for 4-imidazolone-5-propanoate.

Belongs to the metallo-dependent hydrolases superfamily. HutI family. Zn(2+) serves as cofactor. Fe(3+) is required as a cofactor.

The protein localises to the cytoplasm. The enzyme catalyses 4-imidazolone-5-propanoate + H2O = N-formimidoyl-L-glutamate. It functions in the pathway amino-acid degradation; L-histidine degradation into L-glutamate; N-formimidoyl-L-glutamate from L-histidine: step 3/3. Functionally, catalyzes the hydrolytic cleavage of the carbon-nitrogen bond in imidazolone-5-propanoate to yield N-formimidoyl-L-glutamate. It is the third step in the universal histidine degradation pathway. The polypeptide is Imidazolonepropionase (Alkaliphilus oremlandii (strain OhILAs) (Clostridium oremlandii (strain OhILAs))).